Reading from the N-terminus, the 256-residue chain is ATP synthase peripheral stalk subunit b, mitochondrial (256 aa).

The N-terminal 42 residues, 1 to 42 (MLSRVVLSAAATAAPCLKNAAALGPGVLQATRAFHTGQPRLA), are a transit peptide targeting the mitochondrion. Lysine 131 carries the post-translational modification N6-succinyllysine. Lysine 139, lysine 154, lysine 162, lysine 221, lysine 225, lysine 233, and lysine 244 each carry N6-acetyllysine.

It belongs to the eukaryotic ATPase B chain family. As to quaternary structure, component of the ATP synthase complex composed at least of ATP5F1A/subunit alpha, ATP5F1B/subunit beta, ATP5MC1/subunit c (homooctomer), MT-ATP6/subunit a, MT-ATP8/subunit 8, ATP5ME/subunit e, ATP5MF/subunit f, ATP5MG/subunit g, ATP5MK/subunit k, ATP5MJ/subunit j, ATP5F1C/subunit gamma, ATP5F1D/subunit delta, ATP5F1E/subunit epsilon, ATP5PF/subunit F6, ATP5PB/subunit b, ATP5PD/subunit d, ATP5PO/subunit OSCP. ATP synthase complex consists of a soluble F(1) head domain (subunits alpha(3) and beta(3)) - the catalytic core - and a membrane F(0) domain - the membrane proton channel (subunits c, a, 8, e, f, g, k and j). These two domains are linked by a central stalk (subunits gamma, delta, and epsilon) rotating inside the F1 region and a stationary peripheral stalk (subunits F6, b, d, and OSCP).

The protein localises to the mitochondrion. It is found in the mitochondrion inner membrane. In terms of biological role, subunit b, of the mitochondrial membrane ATP synthase complex (F(1)F(0) ATP synthase or Complex V) that produces ATP from ADP in the presence of a proton gradient across the membrane which is generated by electron transport complexes of the respiratory chain. ATP synthase complex consist of a soluble F(1) head domain - the catalytic core - and a membrane F(1) domain - the membrane proton channel. These two domains are linked by a central stalk rotating inside the F(1) region and a stationary peripheral stalk. During catalysis, ATP synthesis in the catalytic domain of F(1) is coupled via a rotary mechanism of the central stalk subunits to proton translocation. In vivo, can only synthesize ATP although its ATP hydrolase activity can be activated artificially in vitro. Part of the complex F(0) domain. Part of the complex F(0) domain and the peripheric stalk, which acts as a stator to hold the catalytic alpha(3)beta(3) subcomplex and subunit a/ATP6 static relative to the rotary elements. The polypeptide is ATP synthase peripheral stalk subunit b, mitochondrial (Mus musculus (Mouse)).